Reading from the N-terminus, the 648-residue chain is MSKVSSIFDTPAPDPRPATTENGAAAKPAARKKKSPAAATKKQLIDQLIREMSQDEDNNDSVDQAPPAKKSRKKADSSGNNNTSKSSVKDKPAKPKKPKTAGLKIKLQDHRKHKEKLRKSLQGVENSRQAAASTSMLEASFNGDSLKDRSNHSTPVHHKGAKAAKKNKNKSHIMPLPLTFTPSKVVVKQEPKTPRRPTMLNVEASSGSLDSVEIGREKFSWVIGPSTTVDEFMAQFWEKKPFLVQRNDPTYYANLLSRGKIDEMLRNNNIEYTKNLDVTSYREGVRETHNPDGRALPPDVWAFYEEGCSIRMLNPQTYLPGVYEMNVKLQEFFHCMTGSNFYLTPPNSQGFAPHYDDIEAFVLQVEGRKHWKLYSPRTASEVLARVSSPNFTQEEIGVPILEVTLEPGDLLYFPRGIIHQASTVPGHHSLHVTMSVYQKNSWADLLELYLPHALSQAAENHLELRRGIPQDLHQHFGIVHSDNETPTRKDLIKKIKSLVDKIFSEEAIDVAVDQLAKRFQHDALPPLLTDQERAQTAYGANYAFNPDGTVPLQTAFTERTTIRLLRRNIVRLVNEENTLRLYYHTENSREYHEYEPNFLEVDQDAALGVELLVKIYPETVAIGALPVEDKVEFAKSLWEKGLIVARGE.

Residues 1–168 (MSKVSSIFDT…KGAKAAKKNK (168 aa)) form a disordered region. A compositionally biased stretch (low complexity) spans 17-28 (PATTENGAAAKP). The span at 109–119 (DHRKHKEKLRK) shows a compositional bias: basic residues. Over residues 123–137 (GVENSRQAAASTSML) the composition is skewed to polar residues. Residues 155–168 (PVHHKGAKAAKKNK) are compositionally biased toward basic residues. The JmjC domain maps to 308–453 (CSIRMLNPQT…DLLELYLPHA (146 aa)). Positions 354, 356, and 419 each coordinate Fe cation.

Belongs to the ROX family. NO66 subfamily. Requires Fe(2+) as cofactor.

It is found in the nucleus. It catalyses the reaction N(6),N(6)-dimethyl-L-lysyl(36)-[histone H3] + 2 2-oxoglutarate + 2 O2 = L-lysyl(36)-[histone H3] + 2 formaldehyde + 2 succinate + 2 CO2. Functionally, oxygenase that can act as both a histone lysine demethylase and a ribosomal histidine hydroxylase. Specifically demethylates 'Lys-4' (H3K4me) and 'Lys-36' (H3K36me) of histone H3, thereby playing a central role in histone code. The sequence is that of Bifunctional lysine-specific demethylase and histidyl-hydroxylase NO66 from Culex quinquefasciatus (Southern house mosquito).